The sequence spans 293 residues: Ribosomal protein L11 methyltransferase (293 aa).

S-adenosyl-L-methionine contacts are provided by Thr145, Gly166, Asp188, and Asn230.

It belongs to the methyltransferase superfamily. PrmA family.

The protein localises to the cytoplasm. It carries out the reaction L-lysyl-[protein] + 3 S-adenosyl-L-methionine = N(6),N(6),N(6)-trimethyl-L-lysyl-[protein] + 3 S-adenosyl-L-homocysteine + 3 H(+). Its function is as follows. Methylates ribosomal protein L11. The sequence is that of Ribosomal protein L11 methyltransferase from Actinobacillus pleuropneumoniae serotype 3 (strain JL03).